A 179-amino-acid chain; its full sequence is NAD(P)H-quinone oxidoreductase subunit I, chloroplastic (179 aa).

4Fe-4S ferredoxin-type domains are found at residues 55-84 (GRIH…VDWR) and 95-124 (LNYS…MTEE). Positions 64, 67, 70, 74, 104, 107, 110, and 114 each coordinate [4Fe-4S] cluster.

Belongs to the complex I 23 kDa subunit family. In terms of assembly, NDH is composed of at least 16 different subunits, 5 of which are encoded in the nucleus. [4Fe-4S] cluster is required as a cofactor.

The protein localises to the plastid. Its subcellular location is the chloroplast thylakoid membrane. The catalysed reaction is a plastoquinone + NADH + (n+1) H(+)(in) = a plastoquinol + NAD(+) + n H(+)(out). The enzyme catalyses a plastoquinone + NADPH + (n+1) H(+)(in) = a plastoquinol + NADP(+) + n H(+)(out). In terms of biological role, NDH shuttles electrons from NAD(P)H:plastoquinone, via FMN and iron-sulfur (Fe-S) centers, to quinones in the photosynthetic chain and possibly in a chloroplast respiratory chain. The immediate electron acceptor for the enzyme in this species is believed to be plastoquinone. Couples the redox reaction to proton translocation, and thus conserves the redox energy in a proton gradient. The protein is NAD(P)H-quinone oxidoreductase subunit I, chloroplastic of Acorus calamus (Sweet flag).